The following is a 309-amino-acid chain: Short chain dehydrogenase MYCFIDRAFT_6125 (309 aa).

The NADP(+) site is built by isoleucine 43, arginine 67, aspartate 88, and arginine 150. Serine 168 functions as the Proton donor in the catalytic mechanism. The NADP(+) site is built by tyrosine 182, lysine 186, valine 215, and serine 217. Tyrosine 182 functions as the Proton acceptor in the catalytic mechanism. The active-site Lowers pKa of active site Tyr is lysine 186.

It belongs to the short-chain dehydrogenases/reductases (SDR) family.

The protein operates within secondary metabolite biosynthesis. Short chain dehydrogenase; part of the gene cluster that mediates the biosynthesis of an emodin derivative that may be involved in black Sigatoka disease of banana. The pathway begins with the synthesis of atrochrysone thioester by the polyketide synthase PKS8-1. The atrochrysone carboxyl ACP thioesterase MYCFIDRAFT_190111 then breaks the thioester bond and releases the atrochrysone carboxylic acid from PKS8-1. The decarboxylase MYCFIDRAFT_34057 then catalyzes the concerted decarboxylation-elimination required to convert atochrysone carboxylic acid into emodin anthrone, which is further oxidized to emodin by the anthrone oxygenase MYCFIDRAFT_34418. The functions of the other tailoring enzymes as well as the final product of the cluster have still to be identified. In Pseudocercospora fijiensis (strain CIRAD86) (Black leaf streak disease fungus), this protein is Short chain dehydrogenase MYCFIDRAFT_6125.